Consider the following 557-residue polypeptide: Glutamyl-tRNA(Gln) amidotransferase subunit B, mitochondrial (557 aa).

The transit peptide at 1–41 (MAAPMLRWGCRGRRWAFARVDGGSCHRRGAPTGSTSNQIRG) directs the protein to the mitochondrion. Positions 26–45 (HRRGAPTGSTSNQIRGESSV) are disordered. Residues 32–45 (TGSTSNQIRGESSV) show a composition bias toward polar residues. An N6-succinyllysine modification is found at lysine 529.

This sequence belongs to the GatB/GatE family. GatB subfamily. In terms of assembly, subunit of the heterotrimeric GatCAB amidotransferase (AdT) complex, composed of A (QRSL1), B (GATB) and C (GATC) subunits. Predominantly expressed in tissues characterized by high rates of oxidative phosphorylation (OxPhos), including muscle and heart.

Its subcellular location is the mitochondrion. The enzyme catalyses L-glutamyl-tRNA(Gln) + L-glutamine + ATP + H2O = L-glutaminyl-tRNA(Gln) + L-glutamate + ADP + phosphate + H(+). Its function is as follows. Allows the formation of correctly charged Gln-tRNA(Gln) through the transamidation of misacylated Glu-tRNA(Gln) in the mitochondria. The reaction takes place in the presence of glutamine and ATP through an activated gamma-phospho-Glu-tRNA(Gln). The protein is Glutamyl-tRNA(Gln) amidotransferase subunit B, mitochondrial of Homo sapiens (Human).